We begin with the raw amino-acid sequence, 546 residues long: (+)-epi-alpha-bisabolol synthase (546 aa).

Mg(2+) is bound by residues Asp297, Asp301, Asp441, Thr445, and Glu449. The DDXXD motif motif lies at 297 to 301; sequence DDIYD.

The protein belongs to the terpene synthase family. It depends on Mg(2+) as a cofactor.

It carries out the reaction (2E,6E)-farnesyl diphosphate + H2O = (+)-epi-alpha-bisabolol + diphosphate. The protein operates within secondary metabolite biosynthesis; terpenoid biosynthesis. Sesquiterpene synthase involved in the biosynthesis of (+)-epi-alpha-bisabolol, a precursor of the natural sweetner hernandulcin. The sequence is that of (+)-epi-alpha-bisabolol synthase from Phyla dulcis (Aztec sweet herb).